We begin with the raw amino-acid sequence, 226 residues long: N-(5'-phosphoribosyl)anthranilate isomerase (226 aa).

The protein belongs to the TrpF family.

It carries out the reaction N-(5-phospho-beta-D-ribosyl)anthranilate = 1-(2-carboxyphenylamino)-1-deoxy-D-ribulose 5-phosphate. It participates in amino-acid biosynthesis; L-tryptophan biosynthesis; L-tryptophan from chorismate: step 3/5. The polypeptide is N-(5'-phosphoribosyl)anthranilate isomerase (TRP1) (Saccharomyces kudriavzevii (strain ATCC MYA-4449 / AS 2.2408 / CBS 8840 / NBRC 1802 / NCYC 2889) (Yeast)).